Here is a 354-residue protein sequence, read N- to C-terminus: MTIQTDDFAPAPPRVVSAAPASPQEEAIERALRPKLLDEYVGQAKVREQLEIFIGAARKRKEALDHVLLFGPPGLGKTTLSHIIAAELGVNLRQTSGPVLEKPKDLAALLTNLEPNDVLFIDEIHRLSPVVEEILYPALEDYQIDIMIGEGPAARSIKLDLQPFTLVGATTRAGMLTNPLRDRFGIVARLEFYTPEELALIVRRSAGLLKVDTDAAGGFEIARRSRGTPRIANRLLRRVRDYAEVKGNGRITEDIAHKALVMLDVDPQGFDLMDRKLLEAVIHRFDGGPVGLDNVAASIGEERDTIEDVIEPYLIQQGYLQRTPRGRIATLAAYRHLGVTPPSSRSDGQDLFGI.

A disordered region spans residues 1-22; that stretch reads MTIQTDDFAPAPPRVVSAAPAS. The segment at 5–193 is large ATPase domain (RuvB-L); that stretch reads TDDFAPAPPR…FGIVARLEFY (189 aa). Residues leucine 32, arginine 33, glycine 74, lysine 77, threonine 78, threonine 79, 140–142, arginine 183, tyrosine 193, and arginine 230 contribute to the ATP site; that span reads EDY. Residue threonine 78 coordinates Mg(2+). Residues 194–264 are small ATPAse domain (RuvB-S); it reads TPEELALIVR…IAHKALVMLD (71 aa). The head domain (RuvB-H) stretch occupies residues 267-354; the sequence is PQGFDLMDRK…RSDGQDLFGI (88 aa). DNA is bound by residues arginine 303, arginine 322, and arginine 327.

Belongs to the RuvB family. Homohexamer. Forms an RuvA(8)-RuvB(12)-Holliday junction (HJ) complex. HJ DNA is sandwiched between 2 RuvA tetramers; dsDNA enters through RuvA and exits via RuvB. An RuvB hexamer assembles on each DNA strand where it exits the tetramer. Each RuvB hexamer is contacted by two RuvA subunits (via domain III) on 2 adjacent RuvB subunits; this complex drives branch migration. In the full resolvosome a probable DNA-RuvA(4)-RuvB(12)-RuvC(2) complex forms which resolves the HJ.

Its subcellular location is the cytoplasm. It carries out the reaction ATP + H2O = ADP + phosphate + H(+). The RuvA-RuvB-RuvC complex processes Holliday junction (HJ) DNA during genetic recombination and DNA repair, while the RuvA-RuvB complex plays an important role in the rescue of blocked DNA replication forks via replication fork reversal (RFR). RuvA specifically binds to HJ cruciform DNA, conferring on it an open structure. The RuvB hexamer acts as an ATP-dependent pump, pulling dsDNA into and through the RuvAB complex. RuvB forms 2 homohexamers on either side of HJ DNA bound by 1 or 2 RuvA tetramers; 4 subunits per hexamer contact DNA at a time. Coordinated motions by a converter formed by DNA-disengaged RuvB subunits stimulates ATP hydrolysis and nucleotide exchange. Immobilization of the converter enables RuvB to convert the ATP-contained energy into a lever motion, pulling 2 nucleotides of DNA out of the RuvA tetramer per ATP hydrolyzed, thus driving DNA branch migration. The RuvB motors rotate together with the DNA substrate, which together with the progressing nucleotide cycle form the mechanistic basis for DNA recombination by continuous HJ branch migration. Branch migration allows RuvC to scan DNA until it finds its consensus sequence, where it cleaves and resolves cruciform DNA. This is Holliday junction branch migration complex subunit RuvB from Variovorax paradoxus (strain S110).